Reading from the N-terminus, the 165-residue chain is Methylated-DNA--protein-cysteine methyltransferase (165 aa).

Residue Cys-126 is the Nucleophile; methyl group acceptor of the active site.

The protein belongs to the MGMT family.

It is found in the cytoplasm. The enzyme catalyses a 6-O-methyl-2'-deoxyguanosine in DNA + L-cysteinyl-[protein] = S-methyl-L-cysteinyl-[protein] + a 2'-deoxyguanosine in DNA. The catalysed reaction is a 4-O-methyl-thymidine in DNA + L-cysteinyl-[protein] = a thymidine in DNA + S-methyl-L-cysteinyl-[protein]. Its function is as follows. Involved in the cellular defense against the biological effects of O6-methylguanine (O6-MeG) and O4-methylthymine (O4-MeT) in DNA. Repairs the methylated nucleobase in DNA by stoichiometrically transferring the methyl group to a cysteine residue in the enzyme. This is a suicide reaction: the enzyme is irreversibly inactivated. This chain is Methylated-DNA--protein-cysteine methyltransferase, found in Mycobacterium bovis (strain ATCC BAA-935 / AF2122/97).